Here is a 536-residue protein sequence, read N- to C-terminus: ADP,ATP carrier protein 4 (536 aa).

9 helical membrane passes run 44 to 64 (VLLF…LYVL), 77 to 97 (SILF…IVIV), 109 to 129 (MLEV…FVIW), 172 to 194 (TMLY…FSRA), 205 to 225 (KFLP…GLLT), 244 to 264 (FSQV…TSFF), 309 to 329 (VVAA…GIVL), 349 to 369 (AQII…THLI), and 378 to 398 (AITA…MVFF). 2 N-linked (GlcNAc...) asparagine glycosylation sites follow: asparagine 400 and asparagine 421. 2 helical membrane passes run 465–485 (LGIN…TVVF) and 493–513 (VVSV…RSIL).

The protein belongs to the ADP/ATP translocase tlc family.

It localises to the cell membrane. Functionally, ATP transporter involved in the uptake of ATP from the host cell cytoplasm. Provides the microsporidian cell with host ATP in exchange for ADP. This is an obligate exchange system. This energy acquiring activity is an important component of microsporidian parasitism. The chain is ADP,ATP carrier protein 4 (NTT4) from Encephalitozoon cuniculi (strain GB-M1) (Microsporidian parasite).